Here is a 342-residue protein sequence, read N- to C-terminus: N-acetyl-gamma-glutamyl-phosphate reductase (342 aa).

C146 is a catalytic residue.

The protein belongs to the NAGSA dehydrogenase family. Type 1 subfamily.

It localises to the cytoplasm. It carries out the reaction N-acetyl-L-glutamate 5-semialdehyde + phosphate + NADP(+) = N-acetyl-L-glutamyl 5-phosphate + NADPH + H(+). The protein operates within amino-acid biosynthesis; L-arginine biosynthesis; N(2)-acetyl-L-ornithine from L-glutamate: step 3/4. Its function is as follows. Catalyzes the NADPH-dependent reduction of N-acetyl-5-glutamyl phosphate to yield N-acetyl-L-glutamate 5-semialdehyde. This chain is N-acetyl-gamma-glutamyl-phosphate reductase, found in Streptomyces coelicolor (strain ATCC BAA-471 / A3(2) / M145).